A 137-amino-acid chain; its full sequence is Small ribosomal subunit protein uS12 (137 aa).

2 disordered regions span residues Met1 to Ser21 and Val34 to Lys57.

It belongs to the universal ribosomal protein uS12 family. As to quaternary structure, part of the 30S ribosomal subunit. Contacts proteins S8 and S17. May interact with IF1 in the 30S initiation complex.

In terms of biological role, with S4 and S5 plays an important role in translational accuracy. Functionally, interacts with and stabilizes bases of the 16S rRNA that are involved in tRNA selection in the A site and with the mRNA backbone. Located at the interface of the 30S and 50S subunits, it traverses the body of the 30S subunit contacting proteins on the other side and probably holding the rRNA structure together. The combined cluster of proteins S8, S12 and S17 appears to hold together the shoulder and platform of the 30S subunit. The protein is Small ribosomal subunit protein uS12 of Streptococcus mutans serotype c (strain ATCC 700610 / UA159).